A 193-amino-acid polypeptide reads, in one-letter code: 3-isopropylmalate dehydratase small subunit (193 aa).

This sequence belongs to the LeuD family. LeuD type 1 subfamily. In terms of assembly, heterodimer of LeuC and LeuD.

It catalyses the reaction (2R,3S)-3-isopropylmalate = (2S)-2-isopropylmalate. Its pathway is amino-acid biosynthesis; L-leucine biosynthesis; L-leucine from 3-methyl-2-oxobutanoate: step 2/4. Catalyzes the isomerization between 2-isopropylmalate and 3-isopropylmalate, via the formation of 2-isopropylmaleate. The polypeptide is 3-isopropylmalate dehydratase small subunit (Listeria innocua serovar 6a (strain ATCC BAA-680 / CLIP 11262)).